We begin with the raw amino-acid sequence, 190 residues long: CASP-like protein 1E2 (190 aa).

The interval 1–21 (MEHEGKNNMNGMEMEKGKREL) is disordered. The Cytoplasmic portion of the chain corresponds to 1–28 (MEHEGKNNMNGMEMEKGKRELGSRKGVE). The helical transmembrane segment at 29-49 (LTMRVLALILTMAAATVLGVA) threads the bilayer. Residues 50–83 (KQTKVVSIKLIPTLPPLDITTTAKASYLSAFVYN) are Extracellular-facing. A helical membrane pass occupies residues 84–104 (ISVNAIACGYTAISIAILMIS). At 105-111 (RGRRSKK) the chain is on the cytoplasmic side. The helical transmembrane segment at 112-132 (LLMVVLLGDLVMVALLFSGTG) threads the bilayer. Over 133-163 (AASAIGLMGLHGNKHVMWKKVCGVFGKFCHR) the chain is Extracellular. A helical membrane pass occupies residues 164–184 (AAPSLPLTLLAAVVFMFLVVL). Topologically, residues 185–190 (DAIKLP) are cytoplasmic.

Belongs to the Casparian strip membrane proteins (CASP) family. In terms of assembly, homodimer and heterodimers.

It localises to the cell membrane. The polypeptide is CASP-like protein 1E2 (Arabidopsis thaliana (Mouse-ear cress)).